Here is a 331-residue protein sequence, read N- to C-terminus: Biotin synthase (331 aa).

Positions 52–277 (PEVEVEGIVS…RTILRYAGGR (226 aa)) constitute a Radical SAM core domain. Residues C67, C71, and C74 each contribute to the [4Fe-4S] cluster site. Residues C110, C202, and R272 each contribute to the [2Fe-2S] cluster site.

The protein belongs to the radical SAM superfamily. Biotin synthase family. In terms of assembly, homodimer. [4Fe-4S] cluster is required as a cofactor. The cofactor is [2Fe-2S] cluster.

The enzyme catalyses (4R,5S)-dethiobiotin + (sulfur carrier)-SH + 2 reduced [2Fe-2S]-[ferredoxin] + 2 S-adenosyl-L-methionine = (sulfur carrier)-H + biotin + 2 5'-deoxyadenosine + 2 L-methionine + 2 oxidized [2Fe-2S]-[ferredoxin]. The protein operates within cofactor biosynthesis; biotin biosynthesis; biotin from 7,8-diaminononanoate: step 2/2. Catalyzes the conversion of dethiobiotin (DTB) to biotin by the insertion of a sulfur atom into dethiobiotin via a radical-based mechanism. The protein is Biotin synthase of Salinispora arenicola (strain CNS-205).